The following is a 276-amino-acid chain: MLINIRPGDAPLSTPIHPTAIIHPNAELHPSVQVAPYAVIGEQVKIGASTIIGPNVVIEGPTEIGVGNRIFAGAVIGTEPQDLKYRGAASQVKIGDHNQIREYVTINRATGENEVTQIGNNNLLMAYAHVAHNCVIEDEVIIANSVALAGHIYIESKARISGVLGVHQFVHIGRLAMVGGMARIERDVPPFTTVEGNPSRVRTLNLIGLKRAGVNEAEISEMKKAFRLIYRSNLTLKQALEQLESWSNNPYVQHLRDFLHQSTTVTGRRGPIPGKE.

Belongs to the transferase hexapeptide repeat family. LpxA subfamily. In terms of assembly, homotrimer.

It is found in the cytoplasm. It catalyses the reaction a (3R)-hydroxyacyl-[ACP] + UDP-N-acetyl-alpha-D-glucosamine = a UDP-3-O-[(3R)-3-hydroxyacyl]-N-acetyl-alpha-D-glucosamine + holo-[ACP]. It functions in the pathway glycolipid biosynthesis; lipid IV(A) biosynthesis; lipid IV(A) from (3R)-3-hydroxytetradecanoyl-[acyl-carrier-protein] and UDP-N-acetyl-alpha-D-glucosamine: step 1/6. Its function is as follows. Involved in the biosynthesis of lipid A, a phosphorylated glycolipid that anchors the lipopolysaccharide to the outer membrane of the cell. This chain is Acyl-[acyl-carrier-protein]--UDP-N-acetylglucosamine O-acyltransferase, found in Gloeothece citriformis (strain PCC 7424) (Cyanothece sp. (strain PCC 7424)).